A 547-amino-acid polypeptide reads, in one-letter code: uncharacterized protein (547 aa).

Topologically, residues 1–19 (MVRLNHAASYFMPIFCSTR) are cytoplasmic. Residues 20–40 (PHIVILSALFSISLFSLFYAS) traverse the membrane as a helical segment. The Vacuolar segment spans residues 41-64 (SELLLHQYDDPLMFKPNSQDYFRT). The chain crosses the membrane as a helical span at residues 65–85 (FLLGLFSPFLYYFLKTFLFNI). Topologically, residues 86–89 (NQRF) are cytoplasmic. Residues 90-110 (LILNLIVDFPINDVFMLLILI) form a helical membrane-spanning segment. Topologically, residues 111–139 (GLAYPQVQDHEGGTIKHKECSWHIIPRQA) are vacuolar. Residues 140-160 (YIFGISWALGEFTICIIGNLF) traverse the membrane as a helical segment. The Cytoplasmic portion of the chain corresponds to 161–340 (NYQEIADPNI…RFIAFSTAYQ (180 aa)). Phosphoserine is present on Ser-225. Positions 237–271 (PIKPLRSSSSTYGSIRQQPHENKKQLHVPDNSQDD) are disordered. Residues 242–253 (RSSSSTYGSIRQ) show a composition bias toward polar residues. A helical membrane pass occupies residues 341–361 (LVTGLLLMILVVGSNIMLTIG). Over 362–394 (ESLILSMYFVYVRGHEGLFTPVVNYFGSRTISN) the chain is Vacuolar. The helical transmembrane segment at 395–415 (FILCVIIPFISLNFLINTSIY) threads the bilayer. Residues 416–523 (LRRELDDWFN…NWRALARNDS (108 aa)) lie on the Cytoplasmic side of the membrane. A helical membrane pass occupies residues 524 to 544 (FVLGVMVSWSLLVFVTGILST). Residues 545-547 (VYI) lie on the Vacuolar side of the membrane.

The protein resides in the vacuole membrane. This is an uncharacterized protein from Saccharomyces cerevisiae (strain ATCC 204508 / S288c) (Baker's yeast).